We begin with the raw amino-acid sequence, 70 residues long: SPbeta prophage-derived uncharacterized protein YotJ (70 aa).

The chain is SPbeta prophage-derived uncharacterized protein YotJ (yotJ) from Bacillus subtilis (strain 168).